Consider the following 140-residue polypeptide: Ribonuclease P protein component (140 aa).

The protein belongs to the RnpA family. Consists of a catalytic RNA component (M1 or rnpB) and a protein subunit.

The enzyme catalyses Endonucleolytic cleavage of RNA, removing 5'-extranucleotides from tRNA precursor.. In terms of biological role, RNaseP catalyzes the removal of the 5'-leader sequence from pre-tRNA to produce the mature 5'-terminus. It can also cleave other RNA substrates such as 4.5S RNA. The protein component plays an auxiliary but essential role in vivo by binding to the 5'-leader sequence and broadening the substrate specificity of the ribozyme. The polypeptide is Ribonuclease P protein component (Nostoc punctiforme (strain ATCC 29133 / PCC 73102)).